The chain runs to 189 residues: Tumor protein p53-inducible protein 11 (189 aa).

Over 1 to 63 the chain is Cytoplasmic; it reads MAAKQPPPLM…FAVREPLGLR (63 aa). Residue Ser-14 is modified to Phosphoserine. A helical transmembrane segment spans residues 64-84; that stretch reads VWQFVSAVLFSGIAIMALAFP. The Extracellular segment spans residues 85–108; that stretch reads DQLYDAVFDGAQVTSKTPIRLYGG. Residues 109-129 traverse the membrane as a helical segment; it reads ALLSISLIMWNALYTAEKVII. Residue Arg-130 is a topological domain, cytoplasmic. A helical membrane pass occupies residues 131–151; it reads WTLLTEACYFSVQFLVVTATL. The Extracellular segment spans residues 152-159; it reads AETGLASQ. The chain crosses the membrane as a helical span at residues 160–180; that stretch reads GILLLLASRLLFVAISVYYYY. At 181–189 the chain is on the cytoplasmic side; the sequence is QVGRKPKKV.

It localises to the membrane. This Bos taurus (Bovine) protein is Tumor protein p53-inducible protein 11 (TP53I11).